A 294-amino-acid polypeptide reads, in one-letter code: 1D-myo-inositol 2-acetamido-2-deoxy-alpha-D-glucopyranoside deacetylase (294 aa).

3 residues coordinate Zn(2+): H13, D16, and H148.

This sequence belongs to the MshB deacetylase family. Zn(2+) is required as a cofactor.

The enzyme catalyses 1D-myo-inositol 2-acetamido-2-deoxy-alpha-D-glucopyranoside + H2O = 1D-myo-inositol 2-amino-2-deoxy-alpha-D-glucopyranoside + acetate. In terms of biological role, catalyzes the deacetylation of 1D-myo-inositol 2-acetamido-2-deoxy-alpha-D-glucopyranoside (GlcNAc-Ins) in the mycothiol biosynthesis pathway. The sequence is that of 1D-myo-inositol 2-acetamido-2-deoxy-alpha-D-glucopyranoside deacetylase from Geodermatophilus obscurus (strain ATCC 25078 / DSM 43160 / JCM 3152 / CCUG 61914 / KCC A-0152 / KCTC 9177 / NBRC 13315 / NRRL B-3577 / G-20).